We begin with the raw amino-acid sequence, 212 residues long: Uridine kinase (212 aa).

ATP is bound at residue 13-20 (GASASGKS).

Belongs to the uridine kinase family.

It is found in the cytoplasm. It carries out the reaction uridine + ATP = UMP + ADP + H(+). The catalysed reaction is cytidine + ATP = CMP + ADP + H(+). Its pathway is pyrimidine metabolism; CTP biosynthesis via salvage pathway; CTP from cytidine: step 1/3. It functions in the pathway pyrimidine metabolism; UMP biosynthesis via salvage pathway; UMP from uridine: step 1/1. The polypeptide is Uridine kinase (Shewanella amazonensis (strain ATCC BAA-1098 / SB2B)).